The chain runs to 358 residues: Nitric oxide synthase oxygenase (358 aa).

Cys-62 is a heme binding site.

The protein belongs to the NOS family. Bacterial NOS oxygenase subfamily. As to quaternary structure, homodimer. Heme is required as a cofactor. Requires (6S)-5,6,7,8-tetrahydrofolate as cofactor.

It carries out the reaction 3 reduced [flavodoxin] + 2 L-arginine + 4 O2 = 3 oxidized [flavodoxin] + 2 L-citrulline + 2 nitric oxide + 4 H2O + 5 H(+). Catalyzes the production of nitric oxide. In Staphylococcus aureus (strain COL), this protein is Nitric oxide synthase oxygenase (nos).